Here is a 1058-residue protein sequence, read N- to C-terminus: Protein translocase subunit SECA2, chloroplastic (1058 aa).

The N-terminal 58 residues, 1 to 58 (MGSVSNLVSPNICHPAPPCLTSRSNKFPWTKPISGLLFYRSVTPIKRCHLVRRSCVVS), are a transit peptide targeting the chloroplast. An ATP-binding site is contributed by 167–174 (MKTGEGKT).

It belongs to the SecA family. In terms of assembly, part of a second Sec protein translocation apparatus. Interacts probably with SCY2.

The protein resides in the plastid. The protein localises to the chloroplast membrane. The catalysed reaction is ATP + H2O + chloroplast-proteinSide 1 = ADP + phosphate + chloroplast-proteinSide 2.. Involved in protein export. Probably interacts with other proteins to allow the postimport or conservative sorting pathway for inner membrane proteins in plastids. May have a central role in coupling the hydrolysis of ATP to the transfer of proteins across the membrane. In Arabidopsis thaliana (Mouse-ear cress), this protein is Protein translocase subunit SECA2, chloroplastic.